A 254-amino-acid polypeptide reads, in one-letter code: MTEEVWMGTWRPHRPRGPIMALYSSPGPKYLIPPTTGFMKHTPTKLRAPAYSFRGAPMLLAENCSPGPRYNVNPKILRTGKDLGPAYSILGRYQTKTMLTPGPGDYFPEKSTKYVFDSAPSHSISARTKAFRVDSTPGPAAYMLPMVMGPNTVGKASQPSFSIKGRSKLGGFSDDLHKTPGPAAYRQTDVRVTKFKAPQYTMAARVEPPGDKTLKPGPGAHSPEKVTLTKPCAPVVTFGIKHSDYMTPLLVDVE.

2 STPGR repeats span residues 180 to 205 and 216 to 241; these read PGPAAYRQTDVRVTKFKAPQYTMAAR and PGPGAHSPEKVTLTKPCAPVVTFGIK. A disordered region spans residues 207-226; it reads EPPGDKTLKPGPGAHSPEKV.

Belongs to the CIMAP family. Microtubule inner protein component of sperm flagellar doublet microtubules. Testis-specific.

The protein localises to the cytoplasm. It localises to the cytoskeleton. Its subcellular location is the flagellum axoneme. Outer dense fibers are filamentous structures located on the outside of the axoneme in the midpiece and principal piece of the mammalian sperm tail. May help to maintain the passive elastic structures and elastic recoil of the sperm tail. This is Ciliary microtubule associated protein 1A from Homo sapiens (Human).